The sequence spans 500 residues: FAD-linked oxidoreductase srdI (500 aa).

Positions 1-20 (MHLSSSLLFTSALLAGGINA) are cleaved as a signal peptide. N-linked (GlcNAc...) asparagine glycosylation is present at Asn-47. An FAD-binding PCMH-type domain is found at 69-241 (YRPPSYQAAI…TQATYKMHKS (173 aa)). N-linked (GlcNAc...) asparagine glycans are attached at residues Asn-257 and Asn-282.

The protein belongs to the oxygen-dependent FAD-linked oxidoreductase family. Requires FAD as cofactor.

FAD-linked oxidoreductase; part of the gene cluster that mediates the biosynthesis of sordarial, a salicylic aldehyde structurally related to the phytotoxin pyriculol. The most interesting aspect of this pathway is formation of an aromatic product from the highly reducing polyketide synthase srdA. SrdA synthesizes a reduced polyketide chain from one molecule of acetyl-CoA and five molecules of malonyl-CoA. The polyketide chain is then reductively released as an aldehyde. The oxidoreductases srdC, srdD and srdE then oxidize one of the hydroxy groups to facilitate the intramolecular aldol condensation, followed by dehydration to yield a salicylic aldehyde. This aldehyde can undergo facile reduction by endogenous reductases to yield the alcohol 1-hydroxy-2-hydroxymethyl-3-pent-1,3-dienylbenzene. The flavin-dependent srdI counteract against the propensity of the aldehydes to be reduced under physiological conditions and is responsible for reoxidizing 1-hydroxy-2-hydroxymethyl-3-pent-1,3-dienylbenzene back to the salicylic aldehyde. This salicylic aldehyde is then selectively epoxidized by the cupin-domain-containing oxidoreductase srdB to yield the epoxide, which can be hydrolyzed stereoselectively by the hydrolase srdG to give the final product sordarial. This is FAD-linked oxidoreductase srdI from Neurospora crassa (strain ATCC 24698 / 74-OR23-1A / CBS 708.71 / DSM 1257 / FGSC 987).